The following is a 137-amino-acid chain: Small ribosomal subunit protein uS11 (137 aa).

The disordered stretch occupies residues 116-137; the sequence is EDVTPVPSDSTRKKGGRRGRRL. Positions 128–137 are enriched in basic residues; it reads KKGGRRGRRL.

Belongs to the universal ribosomal protein uS11 family.

This Kluyveromyces lactis (strain ATCC 8585 / CBS 2359 / DSM 70799 / NBRC 1267 / NRRL Y-1140 / WM37) (Yeast) protein is Small ribosomal subunit protein uS11 (RPS14).